We begin with the raw amino-acid sequence, 325 residues long: UDP-N-acetylglucosamine transporter ROCK1 (325 aa).

Residues methionine 1–methionine 13 lie on the Cytoplasmic side of the membrane. The chain crosses the membrane as a helical span at residues glycine 14–isoleucine 34. The Lumenal portion of the chain corresponds to serine 35–aspartate 42. Residues valine 43–leucine 63 form a helical membrane-spanning segment. Residues methionine 64–serine 109 are Cytoplasmic-facing. Residues leucine 110 to isoleucine 130 form a helical membrane-spanning segment. At leucine 131–glutamine 135 the chain is on the lumenal side. Residues serine 136–glycine 156 traverse the membrane as a helical segment. Over glutamate 157 to lysine 171 the chain is Cytoplasmic. The chain crosses the membrane as a helical span at residues leucine 172 to leucine 192. Over cysteine 193 to serine 203 the chain is Lumenal. The chain crosses the membrane as a helical span at residues serine 204 to leucine 224. Residues lysine 225 to tryptophan 241 are Cytoplasmic-facing. A helical membrane pass occupies residues threonine 242–valine 262. The Lumenal portion of the chain corresponds to threonine 263–arginine 270. Residues lysine 271–glycine 291 traverse the membrane as a helical segment. The Cytoplasmic segment spans residues lysine 292–valine 325.

This sequence belongs to the nucleotide-sugar transporter family. CMP-Sialate:CMP antiporter (TC 2.A.7.12) subfamily. In terms of tissue distribution, expressed in roots, cotyledons, leaves, stems, flowers and siliques.

Its subcellular location is the endoplasmic reticulum membrane. Mediates the transport of UDP-linked acetylated hexosamines across the endoplasmic reticulum (ER) membrane. Facilitates UDP-N-acetylglucosamine (UDP-GlcNAc) and UDP-N-acetylgalactosamine (UDP-GalNAc) transport. Regulates the cytokinin signal in meristematic cells through modulating activity of cytokinin oxidases/dehydrogenases. Part of the ER quality control system, which determines the fate of aberrant proteins in the secretory pathway. In Arabidopsis thaliana (Mouse-ear cress), this protein is UDP-N-acetylglucosamine transporter ROCK1.